The chain runs to 478 residues: Protein nucleotidyltransferase YdiU (478 aa).

Residues glycine 84, glycine 86, arginine 87, lysine 107, aspartate 119, glycine 120, arginine 170, and arginine 177 each coordinate ATP. Aspartate 246 serves as the catalytic Proton acceptor. Mg(2+) is bound by residues asparagine 247 and aspartate 256. Position 256 (aspartate 256) interacts with ATP.

This sequence belongs to the SELO family. The cofactor is Mg(2+). Mn(2+) is required as a cofactor.

The enzyme catalyses L-seryl-[protein] + ATP = 3-O-(5'-adenylyl)-L-seryl-[protein] + diphosphate. It carries out the reaction L-threonyl-[protein] + ATP = 3-O-(5'-adenylyl)-L-threonyl-[protein] + diphosphate. It catalyses the reaction L-tyrosyl-[protein] + ATP = O-(5'-adenylyl)-L-tyrosyl-[protein] + diphosphate. The catalysed reaction is L-histidyl-[protein] + UTP = N(tele)-(5'-uridylyl)-L-histidyl-[protein] + diphosphate. The enzyme catalyses L-seryl-[protein] + UTP = O-(5'-uridylyl)-L-seryl-[protein] + diphosphate. It carries out the reaction L-tyrosyl-[protein] + UTP = O-(5'-uridylyl)-L-tyrosyl-[protein] + diphosphate. Nucleotidyltransferase involved in the post-translational modification of proteins. It can catalyze the addition of adenosine monophosphate (AMP) or uridine monophosphate (UMP) to a protein, resulting in modifications known as AMPylation and UMPylation. In Escherichia coli O9:H4 (strain HS), this protein is Protein nucleotidyltransferase YdiU.